A 141-amino-acid chain; its full sequence is Putative pre-16S rRNA nuclease (141 aa).

This sequence belongs to the YqgF nuclease family.

The protein localises to the cytoplasm. In terms of biological role, could be a nuclease involved in processing of the 5'-end of pre-16S rRNA. This chain is Putative pre-16S rRNA nuclease, found in Dictyoglomus turgidum (strain DSM 6724 / Z-1310).